The primary structure comprises 2273 residues: Acetyl-CoA carboxylase, mitochondrial (2273 aa).

The N-terminal 104 residues, 1–104, are a transit peptide targeting the mitochondrion; the sequence is KGKTITHGQS…RGNIHKHTRL (104 aa). A Biotin carboxylation domain is found at 134 to 635; sequence VISKILIANN…STGWLDDLIL (502 aa). The ATP-grasp domain maps to 292–484; that stretch reads KTNFVSVPDD…LPATQLQIAM (193 aa). Residue 332-337 participates in ATP binding; sequence GGGGKG. Arginine 459 is a catalytic residue. In terms of domain architecture, Biotinyl-binding spans 763–837; the sequence is LEAELNPTQV…EAGDVIAKLT (75 aa). Residue lysine 804 is modified to N6-biotinyllysine. A CoA carboxyltransferase N-terminal domain is found at 1532–1867; sequence PYSVKDWLQP…KRDMSPPLLE (336 aa). Residues 1532 to 2187 are carboxyltransferase; sequence PYSVKDWLQP…EGQVIKRLQK (656 aa). Arginine 1776, lysine 2080, and arginine 2082 together coordinate CoA. Positions 1871–2187 constitute a CoA carboxyltransferase C-terminal domain; the sequence is RWDRDVDFKP…EGQVIKRLQK (317 aa).

Biotin is required as a cofactor.

It is found in the mitochondrion. The enzyme catalyses hydrogencarbonate + acetyl-CoA + ATP = malonyl-CoA + ADP + phosphate + H(+). It carries out the reaction N(6)-biotinyl-L-lysyl-[protein] + hydrogencarbonate + ATP = N(6)-carboxybiotinyl-L-lysyl-[protein] + ADP + phosphate + H(+). It participates in lipid metabolism; malonyl-CoA biosynthesis; malonyl-CoA from acetyl-CoA: step 1/1. Its function is as follows. Catalyzes the rate-limiting reaction in the mitochondrial fatty acid synthesis (FAS) type II pathway. Responsible for the production of the mitochondrial malonyl-CoA, used for the biosynthesis of the cofactor lipoic acid. This protein carries three functions: biotin carboxyl carrier protein, biotin carboxylase, and carboxyltransferase. This Saccharomyces cerevisiae (strain Lalvin EC1118 / Prise de mousse) (Baker's yeast) protein is Acetyl-CoA carboxylase, mitochondrial (HFA1).